Reading from the N-terminus, the 757-residue chain is 5-methyltetrahydropteroyltriglutamate--homocysteine methyltransferase (757 aa).

Lysine 18 and asparagine 116 together coordinate 5-methyltetrahydropteroyltri-L-glutamate. 437–439 is an L-homocysteine binding site; the sequence is IGS. L-methionine is bound by residues 437–439 and glutamate 490; that span reads IGS. Residues 521–522 and tryptophan 567 each bind 5-methyltetrahydropteroyltri-L-glutamate; that span reads RC. Aspartate 605 provides a ligand contact to L-homocysteine. Residue aspartate 605 participates in L-methionine binding. Residues histidine 647, cysteine 649, histidine 658, aspartate 662, and glutamate 671 each contribute to the Zn(2+) site. The Proton donor role is filled by histidine 701. Cysteine 733 is a Zn(2+) binding site.

It belongs to the vitamin-B12 independent methionine synthase family. Requires Zn(2+) as cofactor. Expressed in pollen (at protein level).

It carries out the reaction 5-methyltetrahydropteroyltri-L-glutamate + L-homocysteine = tetrahydropteroyltri-L-glutamate + L-methionine. Its pathway is amino-acid biosynthesis; L-methionine biosynthesis via de novo pathway; L-methionine from L-homocysteine (MetE route): step 1/1. In terms of biological role, catalyzes the transfer of a methyl group from 5-methyltetrahydrofolate to homocysteine resulting in methionine formation. This Kali turgidum (Prickly saltwort) protein is 5-methyltetrahydropteroyltriglutamate--homocysteine methyltransferase.